Reading from the N-terminus, the 243-residue chain is Small ribosomal subunit protein uS3 (243 aa).

N-acetylalanine is present on alanine 2. Serine 6 is subject to Phosphoserine; by PKC/PRKCD. In terms of domain architecture, KH type-2 spans 21–92; sequence LNEFLTRELA…SVELYAEKVA (72 aa). Serine 35 is subject to Phosphoserine. Threonine 42 is subject to Phosphothreonine; by MAPK. Lysine 62 carries the N6-acetyllysine modification. Asymmetric dimethylarginine; by PRMT1 occurs at positions 64, 65, and 67. Residue threonine 70 is modified to Phosphothreonine; by PKB. A Glycyl lysine isopeptide (Lys-Gly) (interchain with G-Cter in ubiquitin) cross-link involves residue lysine 90. At serine 104 the chain carries Phosphoserine. The residue at position 132 (lysine 132) is an N6-succinyllysine. A Glycyl lysine isopeptide (Lys-Gly) (interchain with G-Cter in ubiquitin) cross-link involves residue lysine 202. Phosphoserine; by IKKB is present on serine 209. A Glycyl lysine isopeptide (Lys-Gly) (interchain with G-Cter in SUMO2); alternate cross-link involves residue lysine 214. Lysine 214 is covalently cross-linked (Glycyl lysine isopeptide (Lys-Gly) (interchain with G-Cter in ubiquitin); alternate). The interval 214–243 is disordered; it reads KDEILPTTPISEQKGGKPEPPAMPQPVPTA. At threonine 220 the chain carries Phosphothreonine. At threonine 221 the chain carries Phosphothreonine; by CDK1 and PKC/PRKCD. Phosphoserine is present on serine 224. Lysine 230 is covalently cross-linked (Glycyl lysine isopeptide (Lys-Gly) (interchain with G-Cter in SUMO2)). The span at 231–243 shows a compositional bias: pro residues; sequence PEPPAMPQPVPTA. Position 242 is a phosphothreonine (threonine 242).

Belongs to the universal ribosomal protein uS3 family. Component of the 40S small ribosomal subunit. Identified in a IGF2BP1-dependent mRNP granule complex containing untranslated mRNAs. Interacts with HNRPD. Interacts with PRMT1; the interaction methylates RPS3. Interacts with SUMO1; the interaction sumoylates RPS3. Interacts with UBC9. Interacts with CDK1; the interaction phosphorylates RPS3. Interacts with PRKCD; the interaction phosphorylates RPS3. Interacts with PKB/AKT; the interaction phosphorylates RPS3. Interacts with E2F1; the interaction occurs in the absence of nerve growth factor and increases transcription of pro-apoptotic proteins BCL2L11/BIM and HRK/Dp5. Interacts with the base excision repair proteins APEX1 and OGG1; interaction with OGG1 increases OGG1 N-glycosylase activity. Interacts with UNG; the interaction increases the uracil excision activity of UNG1. Interacts with HSP90; the interaction prevents the ubiquitination and proteasome-dependent degradation of RPS3 and is suppressed by increased ROS levels. Interacts with TOM70; the interaction promotes translocation of RPS3 to the mitochondrion. Interacts (via N-terminus) with RELA (via N-terminus); the interaction enhances the DNA-binding activity of the NF-kappa-B p65-p50 complex. Interacts with NFKBIA; the interaction is direct and may bridge the interaction between RPS3 and RELA. Interacts with IKKB; the interaction phosphorylates RPS3 and enhances its translocation to the nucleus. Interacts (via KH domain) with MDM2 and TP53. Interacts with TRADD. Interacts with CRY1. In terms of processing, methylation by PRMT1 is required for import into the nucleolus and for ribosome assembly. Post-translationally, sumoylation by SUMO1 enhances protein stability through increased resistance to proteolysis. Sumoylation occurs at one or more of the three consensus sites, Lys-18, Lys-214 and Lys-230. Phosphorylation at Thr-221 by CDK1 occurs mainly in G2/M phase. Phosphorylation by PRKCD occurs on a non-ribosomal-associated form which results in translocation of RPS3 to the nucleus and enhances its endonuclease activity. Phosphorylated on Ser-209 by IKKB in response to activation of the NF-kappa-B p65-p50 complex which enhances the association of RPS3 with importin-alpha and mediates the nuclear translocation of RPS3. Phosphorylation by MAPK is required for translocation to the nucleus following exposure of cells to DNA damaging agents such as hydrogen peroxide. Phosphorylation by PKB/AKT mediates RPS3 nuclear translocation, enhances RPS3 endonuclease activity and suppresses RPS3-induced neuronal apoptosis. In terms of processing, ubiquitinated; ubiquitination is prevented by interaction with HSP90 which stabilizes the protein. Monoubiquitinated at Lys-214 by RNF10 and ZNF598 when a ribosome has stalled during translation of poly(A) sequences, leading to preclude synthesis of a long poly-lysine tail and initiate the ribosome quality control (RQC) pathway to degrade the potentially detrimental aberrant nascent polypeptide. Deubiquitinated at Lys-214 by USP10, preventing degradation by the proteasome and promoting 40S ribosome subunit recycling following ribosome dissociation. Post-translationally, ufmylated by UFL1.

The protein resides in the cytoplasm. The protein localises to the nucleus. Its subcellular location is the nucleolus. It is found in the mitochondrion inner membrane. It localises to the cytoskeleton. The protein resides in the spindle. The catalysed reaction is 2'-deoxyribonucleotide-(2'-deoxyribose 5'-phosphate)-2'-deoxyribonucleotide-DNA = a 3'-end 2'-deoxyribonucleotide-(2,3-dehydro-2,3-deoxyribose 5'-phosphate)-DNA + a 5'-end 5'-phospho-2'-deoxyribonucleoside-DNA + H(+). Functionally, component of the small ribosomal subunit. The ribosome is a large ribonucleoprotein complex responsible for the synthesis of proteins in the cell. Has endonuclease activity and plays a role in repair of damaged DNA. Cleaves phosphodiester bonds of DNAs containing altered bases with broad specificity and cleaves supercoiled DNA more efficiently than relaxed DNA. Displays high binding affinity for 7,8-dihydro-8-oxoguanine (8-oxoG), a common DNA lesion caused by reactive oxygen species (ROS). Has also been shown to bind with similar affinity to intact and damaged DNA. Stimulates the N-glycosylase activity of the base excision protein OGG1. Enhances the uracil excision activity of UNG1. Also stimulates the cleavage of the phosphodiester backbone by APEX1. When located in the mitochondrion, reduces cellular ROS levels and mitochondrial DNA damage. Has also been shown to negatively regulate DNA repair in cells exposed to hydrogen peroxide. Plays a role in regulating transcription as part of the NF-kappa-B p65-p50 complex where it binds to the RELA/p65 subunit, enhances binding of the complex to DNA and promotes transcription of target genes. Represses its own translation by binding to its cognate mRNA. Binds to and protects TP53/p53 from MDM2-mediated ubiquitination. Involved in spindle formation and chromosome movement during mitosis by regulating microtubule polymerization. Involved in induction of apoptosis through its role in activation of CASP8. Induces neuronal apoptosis by interacting with the E2F1 transcription factor and acting synergistically with it to up-regulate pro-apoptotic proteins BCL2L11/BIM and HRK/Dp5. Interacts with TRADD following exposure to UV radiation and induces apoptosis by caspase-dependent JNK activation. This chain is Small ribosomal subunit protein uS3 (RPS3), found in Bos taurus (Bovine).